The following is a 372-amino-acid chain: ATP phosphoribosyltransferase regulatory subunit (372 aa).

Belongs to the class-II aminoacyl-tRNA synthetase family. HisZ subfamily. In terms of assembly, heteromultimer composed of HisG and HisZ subunits.

The protein localises to the cytoplasm. The protein operates within amino-acid biosynthesis; L-histidine biosynthesis; L-histidine from 5-phospho-alpha-D-ribose 1-diphosphate: step 1/9. Functionally, required for the first step of histidine biosynthesis. May allow the feedback regulation of ATP phosphoribosyltransferase activity by histidine. The sequence is that of ATP phosphoribosyltransferase regulatory subunit from Allorhizobium ampelinum (strain ATCC BAA-846 / DSM 112012 / S4) (Agrobacterium vitis (strain S4)).